The sequence spans 201 residues: MSDMTNAGNELEPRLITETGLDQRLADIIEPVLIGIGFRLIRVRMLNQNGVTMQVMAERNDGTMTVQDCEEVSMAISPVLDVEDPVDKEYHLEVSSPGIDRPMVRKSDFVRWQGHLVKCETSILIDNRKRFRGKIVEAGVDGFTLERDQVAYGEEQKVTIPFTALSDAKLILTDDLIRDALRADKLAKAEAANQNEADDQE.

The protein belongs to the RimP family.

The protein localises to the cytoplasm. Its function is as follows. Required for maturation of 30S ribosomal subunits. The polypeptide is Ribosome maturation factor RimP (Rhizobium leguminosarum bv. trifolii (strain WSM2304)).